A 201-amino-acid polypeptide reads, in one-letter code: Large ribosomal subunit protein uL4 (201 aa).

A disordered region spans residues 44-73 (RAQKSRAEVKASRKKPWRQKGTGRARAGSV). A compositionally biased stretch (basic residues) spans 55 to 66 (SRKKPWRQKGTG).

It belongs to the universal ribosomal protein uL4 family. Part of the 50S ribosomal subunit.

In terms of biological role, one of the primary rRNA binding proteins, this protein initially binds near the 5'-end of the 23S rRNA. It is important during the early stages of 50S assembly. It makes multiple contacts with different domains of the 23S rRNA in the assembled 50S subunit and ribosome. Functionally, forms part of the polypeptide exit tunnel. In Hamiltonella defensa subsp. Acyrthosiphon pisum (strain 5AT), this protein is Large ribosomal subunit protein uL4.